The sequence spans 211 residues: MARRAQRKAERAKVKQWYKVLAPEMFGRTPVGETLANDPNKLLGRVIETTLGDLTNNFSKQNTKLRFKIDAVAGDTAYTKFIGHEMTTDYIRSLVKRRTSRIDAVVDVTTSDGYLVRVKPSCFTVKRARANQVKAIREISRQVIISRAGNIDLNGLIQEVVLGKLSLDIYKDAKAVYPLRRVEIRKTEILAGPGEVPHPAAVPEPTVTAGS.

It belongs to the eukaryotic ribosomal protein eS1 family.

The sequence is that of Small ribosomal subunit protein eS1 from Methanothrix thermoacetophila (strain DSM 6194 / JCM 14653 / NBRC 101360 / PT) (Methanosaeta thermophila).